A 196-amino-acid chain; its full sequence is Molybdenum cofactor guanylyltransferase (196 aa).

GTP-binding positions include 10-12 (LAG), Lys23, Asn51, Asp69, and Asp99. Asp99 serves as a coordination point for Mg(2+).

It belongs to the MobA family. As to quaternary structure, monomer. Mg(2+) is required as a cofactor.

The protein localises to the cytoplasm. The catalysed reaction is Mo-molybdopterin + GTP + H(+) = Mo-molybdopterin guanine dinucleotide + diphosphate. Its function is as follows. Transfers a GMP moiety from GTP to Mo-molybdopterin (Mo-MPT) cofactor (Moco or molybdenum cofactor) to form Mo-molybdopterin guanine dinucleotide (Mo-MGD) cofactor. The chain is Molybdenum cofactor guanylyltransferase from Shewanella sediminis (strain HAW-EB3).